A 164-amino-acid polypeptide reads, in one-letter code: Cell division protein SepF (164 aa).

The segment at 29–57 (INKGRGASQQEYDEYYEDSTPTVTQKEDP) is disordered.

The protein belongs to the SepF family. In terms of assembly, homodimer. Interacts with FtsZ.

It is found in the cytoplasm. Cell division protein that is part of the divisome complex and is recruited early to the Z-ring. Probably stimulates Z-ring formation, perhaps through the cross-linking of FtsZ protofilaments. Its function overlaps with FtsA. This is Cell division protein SepF from Exiguobacterium sibiricum (strain DSM 17290 / CCUG 55495 / CIP 109462 / JCM 13490 / 255-15).